Here is a 119-residue protein sequence, read N- to C-terminus: Autophagy-related protein 8c (119 aa).

A lipid anchor (Phosphatidylethanolamine amidated glycine) is attached at G117. The propeptide at 118–119 (LV) is removed in mature form.

Belongs to the ATG8 family. In terms of assembly, interacts with ATG4. Interacts with NBR1. The C-terminal 2 residues are removed by ATG4 to expose Gly-117 at the C-terminus. This Gly-117 forms then a thioester bond with the 'Cys-558' of ATG7 (E1-like activating enzyme) before being transferred to the 'Cys-258' of ATG3 (the specific E2 conjugating enzyme), in order to be finally amidated with phosphatidylethanolamine. This lipid modification anchors ATG8 to autophagosomes. Constitutively expressed.

The protein localises to the cytoplasmic vesicle. Its subcellular location is the autophagosome membrane. It is found in the vacuole membrane. It localises to the cytoplasm. The protein resides in the cytoskeleton. In terms of biological role, ubiquitin-like modifier involved in autophagosomes formation. May mediate the delivery of the autophagosomes to the vacuole via the microtubule cytoskeleton. The polypeptide is Autophagy-related protein 8c (ATG8C) (Arabidopsis thaliana (Mouse-ear cress)).